Here is a 148-residue protein sequence, read N- to C-terminus: Nucleoside diphosphate kinase (148 aa).

ATP is bound by residues Lys9, Phe57, Arg85, Thr91, Arg102, and Asn112. The active-site Pros-phosphohistidine intermediate is the His115.

Belongs to the NDK family. As to quaternary structure, homotetramer. Mg(2+) is required as a cofactor.

Its subcellular location is the cytoplasm. The enzyme catalyses a 2'-deoxyribonucleoside 5'-diphosphate + ATP = a 2'-deoxyribonucleoside 5'-triphosphate + ADP. The catalysed reaction is a ribonucleoside 5'-diphosphate + ATP = a ribonucleoside 5'-triphosphate + ADP. Major role in the synthesis of nucleoside triphosphates other than ATP. The ATP gamma phosphate is transferred to the NDP beta phosphate via a ping-pong mechanism, using a phosphorylated active-site intermediate. This Macrococcus caseolyticus (strain JCSC5402) (Macrococcoides caseolyticum) protein is Nucleoside diphosphate kinase.